The chain runs to 263 residues: MPEGPEIRRAADNLEAAIKGKPLTDVWFAFAQLKPYESQLTGQIVTRIETRGKALLTHFSNGLTLYSHNQLYGVWRVIDTGEIPKTTRILRVRLQTADKTILLYSASDIEMLTAEQLTTHPFLQRVGPDVLDARLTPEEVKARLLSPRFRNRQFSGLLLDQAFLAGLGNYLRVEILWQVGLTGQHKAKDLNEAQLNALSHALLDIPRLSYTTRGQADENKHHGALFRFKVFHRDGEACERCGGIIEKTTLSSRPFYWCPHCQK.

Pro-2 acts as the Schiff-base intermediate with DNA in catalysis. Glu-3 serves as the catalytic Proton donor. Residue Lys-53 is the Proton donor; for beta-elimination activity of the active site. Residues Gln-70, Arg-125, and Asn-169 each contribute to the DNA site. The FPG-type zinc finger occupies 229-263 (KVFHRDGEACERCGGIIEKTTLSSRPFYWCPHCQK). Residue Arg-253 is the Proton donor; for delta-elimination activity of the active site.

The protein belongs to the FPG family. The cofactor is Zn(2+).

The catalysed reaction is 2'-deoxyribonucleotide-(2'-deoxyribose 5'-phosphate)-2'-deoxyribonucleotide-DNA = a 3'-end 2'-deoxyribonucleotide-(2,3-dehydro-2,3-deoxyribose 5'-phosphate)-DNA + a 5'-end 5'-phospho-2'-deoxyribonucleoside-DNA + H(+). In terms of biological role, involved in base excision repair of DNA damaged by oxidation or by mutagenic agents. Acts as a DNA glycosylase that recognizes and removes damaged bases. Has a preference for oxidized pyrimidines, such as thymine glycol, 5,6-dihydrouracil and 5,6-dihydrothymine. Has AP (apurinic/apyrimidinic) lyase activity and introduces nicks in the DNA strand. Cleaves the DNA backbone by beta-delta elimination to generate a single-strand break at the site of the removed base with both 3'- and 5'-phosphates. This is Endonuclease 8 from Salmonella agona (strain SL483).